A 600-amino-acid polypeptide reads, in one-letter code: Elongation factor 4 (600 aa).

Residues 5 to 187 (KYIRNFSIIA…AIVSKLPPPK (183 aa)) form the tr-type G domain. Residues 17 to 22 (DHGKST) and 134 to 137 (NKLD) contribute to the GTP site.

It belongs to the TRAFAC class translation factor GTPase superfamily. Classic translation factor GTPase family. LepA subfamily.

It is found in the cell inner membrane. It catalyses the reaction GTP + H2O = GDP + phosphate + H(+). In terms of biological role, required for accurate and efficient protein synthesis under certain stress conditions. May act as a fidelity factor of the translation reaction, by catalyzing a one-codon backward translocation of tRNAs on improperly translocated ribosomes. Back-translocation proceeds from a post-translocation (POST) complex to a pre-translocation (PRE) complex, thus giving elongation factor G a second chance to translocate the tRNAs correctly. Binds to ribosomes in a GTP-dependent manner. This Rickettsia rickettsii (strain Iowa) protein is Elongation factor 4.